The primary structure comprises 534 residues: Probable alkaline/neutral invertase D (534 aa).

2 positions are modified to phosphoserine: Ser7 and Ser37. Residue Thr55 is modified to Phosphothreonine. Ser532 carries the post-translational modification Phosphoserine.

This sequence belongs to the glycosyl hydrolase 100 family.

It carries out the reaction Hydrolysis of terminal non-reducing beta-D-fructofuranoside residues in beta-D-fructofuranosides.. Functionally, invertase that cleaves sucrose into glucose and fructose. In Arabidopsis thaliana (Mouse-ear cress), this protein is Probable alkaline/neutral invertase D.